A 229-amino-acid polypeptide reads, in one-letter code: uncharacterized protein (229 aa).

This is an uncharacterized protein from Sulfolobus islandicus filamentous virus (isolate Iceland/Hveragerdi) (SIFV).